A 971-amino-acid chain; its full sequence is Kinesin-like protein KIN-6 (971 aa).

Disordered stretches follow at residues 1–44 (MEEK…SSLA) and 93–121 (TTTTKSRPRNVWPQNPSKKNNAKENRNPE). Low complexity predominate over residues 29-39 (ATPFTTTTKPP). The 385-residue stretch at 76-460 (SLKIFLRIKP…LRQASPYMKI (385 aa)) folds into the Kinesin motor domain. 202 to 209 (GPSGSGKT) is a binding site for ATP. The segment covering 700 to 709 (RREAGSEESS) has biased composition (basic and acidic residues). Disordered regions lie at residues 700 to 856 (RREA…TEEM) and 872 to 917 (KTTN…RLQP). Over residues 768–783 (QSVNSEENVGIPSTIT) the composition is skewed to polar residues. Positions 785-797 (VEAEVTDFQRDQN) are enriched in basic and acidic residues. The segment covering 809–827 (EVSQDCINSGLSNVQTKSA) has biased composition (polar residues). A compositionally biased stretch (basic and acidic residues) spans 831–842 (RFPDSEKQERNR). Basic residues predominate over residues 903 to 915 (KKQKNGQKPKRRL).

The protein belongs to the TRAFAC class myosin-kinesin ATPase superfamily. Kinesin family. KIN-6 subfamily.

The protein is Kinesin-like protein KIN-6 of Arabidopsis thaliana (Mouse-ear cress).